A 339-amino-acid chain; its full sequence is Anthranilate phosphoribosyltransferase (339 aa).

5-phospho-alpha-D-ribose 1-diphosphate is bound by residues Gly-81, 84-85, Ser-89, 91-94, 109-117, and Ala-121; these read GD, NVST, and KHGNRALSS. Gly-81 contacts anthranilate. Residue Ser-93 coordinates Mg(2+). Asn-112 is a binding site for anthranilate. Residue Arg-167 participates in anthranilate binding. Mg(2+) contacts are provided by Asp-226 and Glu-227.

The protein belongs to the anthranilate phosphoribosyltransferase family. Homodimer. The cofactor is Mg(2+).

It catalyses the reaction N-(5-phospho-beta-D-ribosyl)anthranilate + diphosphate = 5-phospho-alpha-D-ribose 1-diphosphate + anthranilate. It functions in the pathway amino-acid biosynthesis; L-tryptophan biosynthesis; L-tryptophan from chorismate: step 2/5. In terms of biological role, catalyzes the transfer of the phosphoribosyl group of 5-phosphorylribose-1-pyrophosphate (PRPP) to anthranilate to yield N-(5'-phosphoribosyl)-anthranilate (PRA). The chain is Anthranilate phosphoribosyltransferase from Rhodopseudomonas palustris (strain BisB18).